The sequence spans 285 residues: Undecaprenyl-diphosphatase (285 aa).

7 consecutive transmembrane segments (helical) span residues 12–34 (IVIA…HAVI), 49–69 (IFLP…LVYF), 93–113 (IHIL…GGLL), 120–140 (LFGT…LLLL), 159–179 (LTYA…LPGI), 234–254 (VATI…AFLM), and 263–283 (WALS…FFIL).

Belongs to the UppP family.

It localises to the cell inner membrane. It carries out the reaction di-trans,octa-cis-undecaprenyl diphosphate + H2O = di-trans,octa-cis-undecaprenyl phosphate + phosphate + H(+). In terms of biological role, catalyzes the dephosphorylation of undecaprenyl diphosphate (UPP). Confers resistance to bacitracin. The protein is Undecaprenyl-diphosphatase of Gluconacetobacter diazotrophicus (strain ATCC 49037 / DSM 5601 / CCUG 37298 / CIP 103539 / LMG 7603 / PAl5).